The primary structure comprises 309 residues: Taste receptor type 2 member 8 (309 aa).

At 1 to 7 the chain is on the extracellular side; that stretch reads MFSPADN. A helical membrane pass occupies residues 8–28; sequence IFIILITGEFIIGILGNGYIG. The Cytoplasmic segment spans residues 29-50; it reads LVNWIDWIKKKKISTIDCILTN. A helical transmembrane segment spans residues 51 to 71; the sequence is LVISRICLISVMVVNGIVIVL. Residues 72–82 lie on the Extracellular side of the membrane; sequence YPDVYTKTKLQ. A helical transmembrane segment spans residues 83-103; that stretch reads IVICTFWTFANYLNMWFTACL. Over 104-131 the chain is Cytoplasmic; the sequence is NVFYSLKVANSSHPLFLWLKRKIDMVVR. The helical transmembrane segment at 132-152 threads the bilayer; it reads WILLGCFAISLLVSLIIATVL. Residues 153–184 lie on the Extracellular side of the membrane; sequence SHDYRFHAIAKHKRNVTEMFHVSKMPYFEPLT. A glycan (N-linked (GlcNAc...) asparagine) is linked at Asn167. Residues 185 to 205 traverse the membrane as a helical segment; that stretch reads LFNLLAIVPFIVSLMSFFLLV. Residues 206-239 lie on the Cytoplasmic side of the membrane; it reads RSLWRHTKQIKLYATGGRDPSTEAHVRAIKTMTL. The helical transmembrane segment at 240–260 threads the bilayer; that stretch reads LIFFFFLYYITSLLVXFSYLI. Topologically, residues 261-266 are extracellular; that stretch reads TNYKLA. The helical transmembrane segment at 267–287 threads the bilayer; that stretch reads MAFGEIVAILYPSGHSLILII. Over 288–309 the chain is Cytoplasmic; sequence LNNKLRQASVRMLTCRKIACVT.

This sequence belongs to the G-protein coupled receptor T2R family.

It localises to the membrane. In terms of biological role, receptor that may play a role in the perception of bitterness and is gustducin-linked. May play a role in sensing the chemical composition of the gastrointestinal content. The activity of this receptor may stimulate alpha gustducin, mediate PLC-beta-2 activation and lead to the gating of TRPM5. This is Taste receptor type 2 member 8 (TAS2R8) from Papio hamadryas (Hamadryas baboon).